The following is an 87-amino-acid chain: Putative RNase MJ1548 (87 aa).

Catalysis depends on residues arginine 65 and histidine 70. Positions 65–72 match the RX(4)HXY motif motif; that stretch reads RNAIVHKY. Tyrosine 72 is modified (O-di-AMP-tyrosine).

The protein belongs to the HepT RNase toxin family. In terms of assembly, homodimer, probably forms a complex with cognate antitoxin MJ1547. Post-translationally, modified by cognate antitoxin MJ1547; probably at least 2 successive AMPylation events occur on Tyr-72.

Probable toxic component of a putative type VII toxin-antitoxin (TA) system, probably an RNase. Probably neutralized by cognate antitoxin MJ1547. Neutralization may be due to AMPylation by antitoxin MJ1547. The polypeptide is Putative RNase MJ1548 (Methanocaldococcus jannaschii (strain ATCC 43067 / DSM 2661 / JAL-1 / JCM 10045 / NBRC 100440) (Methanococcus jannaschii)).